The chain runs to 334 residues: Flotillin-like protein FloA (334 aa).

Residues 3 to 23 (LYLIFLIVVGVVGLVLVGLFL) form a helical membrane-spanning segment.

It belongs to the flotillin-like FloA family. As to quaternary structure, homooligomerizes.

It is found in the cell membrane. Its subcellular location is the membrane raft. In terms of biological role, found in functional membrane microdomains (FMM) that may be equivalent to eukaryotic membrane rafts. FMMs are highly dynamic and increase in number as cells age. Flotillins are thought to be important factors in membrane fluidity. In Opitutus terrae (strain DSM 11246 / JCM 15787 / PB90-1), this protein is Flotillin-like protein FloA.